A 177-amino-acid polypeptide reads, in one-letter code: Dihydrofolate reductase type 9 (177 aa).

The region spanning 3-167 is the DHFR domain; sequence SLNMIVAVNK…TKLIFQIWIN (165 aa).

The protein belongs to the dihydrofolate reductase family. In terms of assembly, homodimer.

The enzyme catalyses (6S)-5,6,7,8-tetrahydrofolate + NADP(+) = 7,8-dihydrofolate + NADPH + H(+). It participates in cofactor biosynthesis; tetrahydrofolate biosynthesis; 5,6,7,8-tetrahydrofolate from 7,8-dihydrofolate: step 1/1. In terms of biological role, key enzyme in folate metabolism. Catalyzes an essential reaction for de novo glycine and purine synthesis, and for DNA precursor synthesis. The protein is Dihydrofolate reductase type 9 (dhfrIX) of Escherichia coli.